A 137-amino-acid polypeptide reads, in one-letter code: Bombinin-like peptides 2 (137 aa).

Residues 1–18 (MNFKYIVAVSILIASAYA) form the signal peptide. At asparagine 70 the chain carries Asparagine amide. The disordered stretch occupies residues 92-112 (DSLEHPEEASEKETRGFNQEE). Isoleucine 136 carries the isoleucine amide modification.

Belongs to the bombinin family. Expressed by the skin glands.

The protein localises to the secreted. Its function is as follows. Bombinin-like peptide 2 has antimicrobial activity, but no hemolytic activity. Preliminary evidence indicates that this peptide does not lyse and thus kill the bacteria by its antimicrobial activity. In terms of biological role, bombinin H2 has antibacterial and hemolytic activity. In Bombina variegata (Yellow-bellied toad), this protein is Bombinin-like peptides 2.